Here is a 636-residue protein sequence, read N- to C-terminus: Biosynthetic arginine decarboxylase (636 aa).

Position 101 is an N6-(pyridoxal phosphate)lysine (Lys101). 286 to 296 (FDVGGGLAVDY) provides a ligand contact to substrate.

This sequence belongs to the Orn/Lys/Arg decarboxylase class-II family. SpeA subfamily. Mg(2+) serves as cofactor. Pyridoxal 5'-phosphate is required as a cofactor.

It carries out the reaction L-arginine + H(+) = agmatine + CO2. It functions in the pathway amine and polyamine biosynthesis; agmatine biosynthesis; agmatine from L-arginine: step 1/1. Its function is as follows. Catalyzes the biosynthesis of agmatine from arginine. This Shewanella denitrificans (strain OS217 / ATCC BAA-1090 / DSM 15013) protein is Biosynthetic arginine decarboxylase.